We begin with the raw amino-acid sequence, 88 residues long: Putative septation protein SpoVG (88 aa).

Belongs to the SpoVG family.

Its function is as follows. Could be involved in septation. The polypeptide is Putative septation protein SpoVG (Desulforudis audaxviator (strain MP104C)).